Here is a 195-residue protein sequence, read N- to C-terminus: Coagulogen (195 aa).

Positions 1–20 (MEKKLLGIAILFVTVVSVLA) are cleaved as a signal peptide. 8 disulfide bridges follow: Cys28–Cys188, Cys30–Cys115, Cys80–Cys182, Cys85–Cys141, Cys95–Cys189, Cys108–Cys161, Cys147–Cys191, and Cys155–Cys193.

It belongs to the coagulin family. As to quaternary structure, coagulogen is cleaved after Arg-38 and Arg-66 by a clotting enzyme contained in the hemocyte and activated by a bacterial endotoxin (lipopolysaccharide). This cleavage releases the peptide C and leaves 2 chains of coagulin, A and B, linked by two disulfide bonds. Coagulin molecules interlink to form a gel. Hemolymph.

It localises to the secreted. Functionally, coagulogen is a gel-forming protein of hemolymph; it hinders the spread of invaders by immobilizing them. The chain is Coagulogen from Limulus polyphemus (Atlantic horseshoe crab).